We begin with the raw amino-acid sequence, 74 residues long: Protein SlyX homolog (74 aa).

This sequence belongs to the SlyX family.

The polypeptide is Protein SlyX homolog (Aliivibrio fischeri (strain ATCC 700601 / ES114) (Vibrio fischeri)).